A 659-amino-acid polypeptide reads, in one-letter code: Biosynthetic arginine decarboxylase (659 aa).

Lys-128 bears the N6-(pyridoxal phosphate)lysine mark. A substrate-binding site is contributed by 308–318 (FDVGGGLGVDY).

The protein belongs to the Orn/Lys/Arg decarboxylase class-II family. SpeA subfamily. Mg(2+) serves as cofactor. Requires pyridoxal 5'-phosphate as cofactor.

It carries out the reaction L-arginine + H(+) = agmatine + CO2. Its pathway is amine and polyamine biosynthesis; agmatine biosynthesis; agmatine from L-arginine: step 1/1. Catalyzes the biosynthesis of agmatine from arginine. This chain is Biosynthetic arginine decarboxylase, found in Yersinia pestis.